A 421-amino-acid chain; its full sequence is Serine hydroxymethyltransferase (421 aa).

Residues leucine 121 and 125–127 (GHL) contribute to the (6S)-5,6,7,8-tetrahydrofolate site. An N6-(pyridoxal phosphate)lysine modification is found at lysine 229.

It belongs to the SHMT family. In terms of assembly, homodimer. Pyridoxal 5'-phosphate is required as a cofactor.

The protein localises to the cytoplasm. The enzyme catalyses (6R)-5,10-methylene-5,6,7,8-tetrahydrofolate + glycine + H2O = (6S)-5,6,7,8-tetrahydrofolate + L-serine. It participates in one-carbon metabolism; tetrahydrofolate interconversion. It functions in the pathway amino-acid biosynthesis; glycine biosynthesis; glycine from L-serine: step 1/1. In terms of biological role, catalyzes the reversible interconversion of serine and glycine with tetrahydrofolate (THF) serving as the one-carbon carrier. This reaction serves as the major source of one-carbon groups required for the biosynthesis of purines, thymidylate, methionine, and other important biomolecules. Also exhibits THF-independent aldolase activity toward beta-hydroxyamino acids, producing glycine and aldehydes, via a retro-aldol mechanism. In Actinobacillus pleuropneumoniae serotype 7 (strain AP76), this protein is Serine hydroxymethyltransferase.